The following is a 364-amino-acid chain: tRNA-specific 2-thiouridylase MnmA 2 (364 aa).

ATP contacts are provided by residues 10–17 (GMSGGVDS) and methionine 36. Cysteine 106 serves as the catalytic Nucleophile. The cysteines at positions 106 and 204 are disulfide-linked. Glycine 130 contributes to the ATP binding site. The interaction with tRNA stretch occupies residues 154–156 (KDQ). The active-site Cysteine persulfide intermediate is the cysteine 204. Residues 310-311 (RY) form an interaction with tRNA region.

Belongs to the MnmA/TRMU family.

It localises to the cytoplasm. The catalysed reaction is S-sulfanyl-L-cysteinyl-[protein] + uridine(34) in tRNA + AH2 + ATP = 2-thiouridine(34) in tRNA + L-cysteinyl-[protein] + A + AMP + diphosphate + H(+). In terms of biological role, catalyzes the 2-thiolation of uridine at the wobble position (U34) of tRNA, leading to the formation of s(2)U34. This chain is tRNA-specific 2-thiouridylase MnmA 2, found in Thermoanaerobacter pseudethanolicus (strain ATCC 33223 / 39E) (Clostridium thermohydrosulfuricum).